The chain runs to 458 residues: Argininosuccinate lyase (458 aa).

It belongs to the lyase 1 family. Argininosuccinate lyase subfamily.

Its subcellular location is the cytoplasm. The catalysed reaction is 2-(N(omega)-L-arginino)succinate = fumarate + L-arginine. The protein operates within amino-acid biosynthesis; L-arginine biosynthesis; L-arginine from L-ornithine and carbamoyl phosphate: step 3/3. This Salmonella newport (strain SL254) protein is Argininosuccinate lyase.